Reading from the N-terminus, the 756-residue chain is Nucleomorphin (756 aa).

Residues 1 to 10 (MDLDYSSDNS) show a composition bias toward polar residues. The tract at residues 1–113 (MDLDYSSDNS…SQSNEDLSSS (113 aa)) is disordered. Composition is skewed to low complexity over residues 16–66 (NQNN…RPSS) and 75–94 (NNNNNNNNNNNNNNNNNNNN). Over residues 95–113 (GATISHPPTSQSNEDLSSS) the composition is skewed to polar residues. The 93-residue stretch at 124-216 (LNSNIFENLG…ELLGVENYLV (93 aa)) folds into the BRCT domain. 4 disordered regions span residues 229–251 (NSSQDLIEKPNEEEPQNGTINEQ), 272–298 (PSSLEKQEPKETELQTQQQPQTELKSE), 359–403 (KIDL…NKNN), and 422–463 (TSST…LLNL). 3 stretches are compositionally biased toward low complexity: residues 285 to 298 (LQTQQQPQTELKSE), 364 to 401 (NNNNNNNNNNNNNNNNNNNNNNNNNNNNNNSSSNNKNK), and 422 to 432 (TSSTSSTLSSS). Residues 448–459 (KSKKKFSQKKNH) show a composition bias toward basic residues. The Nuclear localization signal signature appears at 464–480 (KKSYQDPEIIAHSRPRK). A calmodulin binding region spans residues 495-512 (ANYISNLDGFKYYARANK). The segment covering 514-529 (SLNSNATTSGGNNRSI) has biased composition (polar residues). Residues 514 to 587 (SLNSNATTSG…SDEDDFDSDE (74 aa)) are disordered. Over residues 536 to 587 (YDDEEEDEEDEDEEDEEEDEEEEEEEEEEEEDYDDEDLNDEESDEDDFDSDE) the composition is skewed to acidic residues. Residues 537–588 (DDEEEDEEDEDEEDEEEDEEEEEEEEEEEEDYDDEDLNDEESDEDDFDSDED) are DEED region. Calmodulin binding regions lie at residues 589–606 (VSRFIKGKLLQKQQKIYK) and 596–613 (KLLQKQQKIYKDLERFEH). Disordered regions lie at residues 613-639 (HSRQQQHHHHQSSQVNSSKPRSRSHSR) and 660-700 (LSPT…RTNI). A compositionally biased stretch (polar residues) spans 668-691 (LSNQFHQDGGNNTTDGNLFNNFST).

As to quaternary structure, interacts with calmodulin and CBPD1 in the presence of Ca(2+).

It localises to the nucleus. This is Nucleomorphin (numA) from Dictyostelium discoideum (Social amoeba).